Reading from the N-terminus, the 140-residue chain is Large ribosomal subunit protein uL11 (140 aa).

Belongs to the universal ribosomal protein uL11 family. In terms of assembly, part of the ribosomal stalk of the 50S ribosomal subunit. Interacts with L10 and the large rRNA to form the base of the stalk. L10 forms an elongated spine to which L12 dimers bind in a sequential fashion forming a multimeric L10(L12)X complex. Post-translationally, one or more lysine residues are methylated.

Its function is as follows. Forms part of the ribosomal stalk which helps the ribosome interact with GTP-bound translation factors. This is Large ribosomal subunit protein uL11 from Dehalococcoides mccartyi (strain ATCC BAA-2266 / KCTC 15142 / 195) (Dehalococcoides ethenogenes (strain 195)).